The following is a 330-amino-acid chain: Mycothiol acetyltransferase (330 aa).

N-acetyltransferase domains follow at residues 5 to 142 and 171 to 328; these read LVTD…MPLR and VRLR…APRP. Glutamate 36 contacts 1D-myo-inositol 2-(L-cysteinylamino)-2-deoxy-alpha-D-glucopyranoside. 80 to 82 serves as a coordination point for acetyl-CoA; sequence VVV. The interval 142 to 161 is disordered; it reads RDIAGDEPGGPWEAPELPEP. 1D-myo-inositol 2-(L-cysteinylamino)-2-deoxy-alpha-D-glucopyranoside-binding residues include glutamate 198, lysine 238, and glutamate 254. Residues 258-260 and 265-271 each bind acetyl-CoA; these read VGV and QGSGLGR. Residue tyrosine 292 coordinates 1D-myo-inositol 2-(L-cysteinylamino)-2-deoxy-alpha-D-glucopyranoside. 297-302 is an acetyl-CoA binding site; the sequence is NEAAVR.

This sequence belongs to the acetyltransferase family. MshD subfamily. As to quaternary structure, monomer.

The catalysed reaction is 1D-myo-inositol 2-(L-cysteinylamino)-2-deoxy-alpha-D-glucopyranoside + acetyl-CoA = mycothiol + CoA + H(+). In terms of biological role, catalyzes the transfer of acetyl from acetyl-CoA to desacetylmycothiol (Cys-GlcN-Ins) to form mycothiol. This chain is Mycothiol acetyltransferase, found in Nocardiopsis dassonvillei (strain ATCC 23218 / DSM 43111 / CIP 107115 / JCM 7437 / KCTC 9190 / NBRC 14626 / NCTC 10488 / NRRL B-5397 / IMRU 509) (Actinomadura dassonvillei).